A 121-amino-acid polypeptide reads, in one-letter code: Large ribosomal subunit protein uL14 (121 aa).

The protein belongs to the universal ribosomal protein uL14 family. In terms of assembly, part of the 50S ribosomal subunit. Forms a cluster with proteins L3 and L19. In the 70S ribosome, L14 and L19 interact and together make contacts with the 16S rRNA in bridges B5 and B8.

Its function is as follows. Binds to 23S rRNA. Forms part of two intersubunit bridges in the 70S ribosome. In Opitutus terrae (strain DSM 11246 / JCM 15787 / PB90-1), this protein is Large ribosomal subunit protein uL14.